Consider the following 462-residue polypeptide: Siroheme synthase (462 aa).

The interval 1–201 (MQFLPLFHKL…GKPEEGERLL (201 aa)) is precorrin-2 dehydrogenase /sirohydrochlorin ferrochelatase. NAD(+) contacts are provided by residues 22-23 (EV) and 43-44 (PE). S126 carries the phosphoserine modification. Residues 214–462 (GEVYLVGAGP…AWFEGAQGSL (249 aa)) form a uroporphyrinogen-III C-methyltransferase region. P223 contributes to the S-adenosyl-L-methionine binding site. The Proton acceptor role is filled by D246. The active-site Proton donor is the K268. S-adenosyl-L-methionine contacts are provided by residues 299–301 (GGD), I304, 329–330 (TA), M381, and G410.

The protein in the N-terminal section; belongs to the precorrin-2 dehydrogenase / sirohydrochlorin ferrochelatase family. This sequence in the C-terminal section; belongs to the precorrin methyltransferase family.

The catalysed reaction is uroporphyrinogen III + 2 S-adenosyl-L-methionine = precorrin-2 + 2 S-adenosyl-L-homocysteine + H(+). It carries out the reaction precorrin-2 + NAD(+) = sirohydrochlorin + NADH + 2 H(+). The enzyme catalyses siroheme + 2 H(+) = sirohydrochlorin + Fe(2+). It participates in cofactor biosynthesis; adenosylcobalamin biosynthesis; precorrin-2 from uroporphyrinogen III: step 1/1. The protein operates within cofactor biosynthesis; adenosylcobalamin biosynthesis; sirohydrochlorin from precorrin-2: step 1/1. Its pathway is porphyrin-containing compound metabolism; siroheme biosynthesis; precorrin-2 from uroporphyrinogen III: step 1/1. It functions in the pathway porphyrin-containing compound metabolism; siroheme biosynthesis; siroheme from sirohydrochlorin: step 1/1. It participates in porphyrin-containing compound metabolism; siroheme biosynthesis; sirohydrochlorin from precorrin-2: step 1/1. In terms of biological role, multifunctional enzyme that catalyzes the SAM-dependent methylations of uroporphyrinogen III at position C-2 and C-7 to form precorrin-2 via precorrin-1. Then it catalyzes the NAD-dependent ring dehydrogenation of precorrin-2 to yield sirohydrochlorin. Finally, it catalyzes the ferrochelation of sirohydrochlorin to yield siroheme. This Ectopseudomonas mendocina (strain ymp) (Pseudomonas mendocina) protein is Siroheme synthase.